The following is a 269-amino-acid chain: Adenosylcobinamide-GDP ribazoletransferase (269 aa).

Transmembrane regions (helical) follow at residues 63–83 (SAYY…LLYL), 87–107 (LPPG…TGML), 137–157 (VGAF…SLLG), 158–178 (AGLP…VVLM), 202–222 (LAFL…AALV), and 246–266 (VYGL…GWGF).

It belongs to the CobS family. Mg(2+) serves as cofactor.

The protein localises to the cell membrane. The catalysed reaction is alpha-ribazole + adenosylcob(III)inamide-GDP = adenosylcob(III)alamin + GMP + H(+). It catalyses the reaction alpha-ribazole 5'-phosphate + adenosylcob(III)inamide-GDP = adenosylcob(III)alamin 5'-phosphate + GMP + H(+). Its pathway is cofactor biosynthesis; adenosylcobalamin biosynthesis; adenosylcobalamin from cob(II)yrinate a,c-diamide: step 7/7. In terms of biological role, joins adenosylcobinamide-GDP and alpha-ribazole to generate adenosylcobalamin (Ado-cobalamin). Also synthesizes adenosylcobalamin 5'-phosphate from adenosylcobinamide-GDP and alpha-ribazole 5'-phosphate. In Deinococcus radiodurans (strain ATCC 13939 / DSM 20539 / JCM 16871 / CCUG 27074 / LMG 4051 / NBRC 15346 / NCIMB 9279 / VKM B-1422 / R1), this protein is Adenosylcobinamide-GDP ribazoletransferase.